A 160-amino-acid chain; its full sequence is Dihydrofolate reductase (160 aa).

The DHFR domain maps to 1 to 160; sequence MVKAIWAMDQ…KVAYYHKIAR (160 aa). A substrate-binding site is contributed by 5 to 7; that stretch reads IWA. Residues 6–7 and 14–19 each bind NADP(+); these read WA and IGNGNS. E27 and R32 together coordinate substrate. 43–46 provides a ligand contact to NADP(+); the sequence is GSAT. Substrate is bound at residue R57. NADP(+) contacts are provided by residues 62–65 and 101–106; these read LTRN and CGGAQV. Position 120 (S120) interacts with substrate.

Belongs to the dihydrofolate reductase family.

It carries out the reaction (6S)-5,6,7,8-tetrahydrofolate + NADP(+) = 7,8-dihydrofolate + NADPH + H(+). Its pathway is cofactor biosynthesis; tetrahydrofolate biosynthesis; 5,6,7,8-tetrahydrofolate from 7,8-dihydrofolate: step 1/1. Functionally, key enzyme in folate metabolism. Catalyzes an essential reaction for de novo glycine and purine synthesis, and for DNA precursor synthesis. The chain is Dihydrofolate reductase (folA) from Mycoplasma pneumoniae (strain ATCC 29342 / M129 / Subtype 1) (Mycoplasmoides pneumoniae).